The following is a 26-amino-acid chain: Omega-conotoxin TVIA (26 aa).

3 cysteine pairs are disulfide-bonded: cysteine 1/cysteine 16, cysteine 8/cysteine 19, and cysteine 15/cysteine 26. Residues proline 4, proline 10, and proline 21 each carry the 4-hydroxyproline modification.

The protein belongs to the conotoxin O1 superfamily. Expressed by the venom duct.

It localises to the secreted. Omega-conotoxins act at presynaptic membranes, they bind and block voltage-gated calcium channels (Cav). The chain is Omega-conotoxin TVIA from Conus tulipa (Fish-hunting cone snail).